Reading from the N-terminus, the 488-residue chain is MLRIAKEALTFDDVLLVPAHSTVLPNTADLSTQLTKTIRLNIPMLSAAMDTVTEARLAIALAQEGGIGFIHKNMSIERQAEEVRRVKKHESGVVTDPQTVLPTTTLREVKELTERNGFAGYPVVTEENELVGIITGRDVRFVTDLNQPVSVYMTPKERLVTVREGEAREVVLAKMHEKRVEKALVVDDEFHLIGMITVKDFQKAERKPNACKDEQGRLRVGAAVGAGAGNEERVDALVAAGVDVLLIDSSHGHSEGVLQRIRETRAKYPDLQIIGGNVATAAGARALAEAGCSAVKVGIGPGSICTTRIVTGVGVPQITAVADAVEALEGTGIPVIADGGIRFSGDIAKAIAAGASAVMVGSMLAGTEESPGEIELYQGRSYKSYRGMGSLGAMSKGSSDRYFQSDNAADKLVPEGIEGRVAYKGRLKEIIHQQMGGLRSCMGLTGCGTIDELRTKAEFVRISGAGIQESHVHDVTITKESPNYRLGS.

CBS domains lie at 93-149 and 153-214; these read VVTD…NQPV and MTPK…CKDE. NAD(+) contacts are provided by residues Asp-248 and 248-250; that span reads DSS. N6-acetyllysine is present on Lys-267. 298–300 lines the NAD(+) pocket; sequence GIG. Gly-300 and Gly-302 together coordinate K(+). Ser-303 provides a ligand contact to IMP. Cys-305 is a binding site for K(+). Residue Cys-305 is the Thioimidate intermediate of the active site. Residues 338–340, 361–362, and 385–389 contribute to the IMP site; these read DGG, GS, and YRGMG. Residue Arg-401 is the Proton acceptor of the active site. An IMP-binding site is contributed by Glu-415. Lys-428 carries the N6-acetyllysine modification. Positions 469, 470, and 471 each coordinate K(+).

It belongs to the IMPDH/GMPR family. As to quaternary structure, homotetramer. It depends on K(+) as a cofactor.

It carries out the reaction IMP + NAD(+) + H2O = XMP + NADH + H(+). It functions in the pathway purine metabolism; XMP biosynthesis via de novo pathway; XMP from IMP: step 1/1. With respect to regulation, mycophenolic acid (MPA) is a non-competitive inhibitor that prevents formation of the closed enzyme conformation by binding to the same site as the amobile flap. In contrast, mizoribine monophosphate (MZP) is a competitive inhibitor that induces the closed conformation. MPA is a potent inhibitor of mammalian IMPDHs but a poor inhibitor of the bacterial enzymes. MZP is a more potent inhibitor of bacterial IMPDH. Catalyzes the conversion of inosine 5'-phosphate (IMP) to xanthosine 5'-phosphate (XMP), the first committed and rate-limiting step in the de novo synthesis of guanine nucleotides, and therefore plays an important role in the regulation of cell growth. This chain is Inosine-5'-monophosphate dehydrogenase, found in Escherichia coli O157:H7.